Here is a 397-residue protein sequence, read N- to C-terminus: Acetate kinase (397 aa).

Asparagine 7 is a Mg(2+) binding site. Lysine 14 is an ATP binding site. Substrate is bound at residue arginine 90. Aspartate 147 functions as the Proton donor/acceptor in the catalytic mechanism. ATP-binding positions include 207–211, 282–284, and 330–334; these read HLGNG, DFR, and GLGEN. Mg(2+) is bound at residue glutamate 383.

The protein belongs to the acetokinase family. As to quaternary structure, homodimer. Requires Mg(2+) as cofactor. It depends on Mn(2+) as a cofactor.

Its subcellular location is the cytoplasm. The catalysed reaction is acetate + ATP = acetyl phosphate + ADP. The protein operates within metabolic intermediate biosynthesis; acetyl-CoA biosynthesis; acetyl-CoA from acetate: step 1/2. Functionally, catalyzes the formation of acetyl phosphate from acetate and ATP. Can also catalyze the reverse reaction. In Clostridium botulinum (strain Langeland / NCTC 10281 / Type F), this protein is Acetate kinase.